Reading from the N-terminus, the 47-residue chain is MKKFRWVALVVVVLACLLLWAQVFNMMCDQDVQFFSGICAINQFIPW.

A helical transmembrane segment spans residues 6–26 (WVALVVVVLACLLLWAQVFNM).

It belongs to the MgrB family. May form homooligomers. Probably interacts with the periplasmic domain of PhoQ.

The protein resides in the cell inner membrane. Its function is as follows. PhoP-regulated transcription is redox-sensitive, being activated when the periplasm becomes more reducing. MgrB acts between DsbA/DsbB and PhoP/PhoQ in this pathway. Represses PhoP/PhoQ signaling, possibly by binding to the periplasmic domain of PhoQ, altering its activity and that of downstream effector PhoP. This chain is PhoP/PhoQ regulator MgrB, found in Escherichia coli O127:H6 (strain E2348/69 / EPEC).